The following is a 338-amino-acid chain: Lipopolysaccharide 1,2-glucosyltransferase (338 aa).

UDP-binding positions include 33-38 (GVDANY) and 130-131 (DA). Mg(2+) is bound by residues Asp130 and Asp132. Short sequence motifs (DXD) lie at residues 130–132 (DAD) and 215–217 (DQD). His264 is a Mg(2+) binding site. 264 to 270 (HYTGATK) lines the UDP pocket.

The protein belongs to the glycosyltransferase 8 family. The cofactor is Mg(2+).

The protein resides in the cell inner membrane. It catalyses the reaction UDP-glucose + [lipopolysaccharide] = UDP + D-glucosyl-[lipopolysaccharide].. It carries out the reaction alpha-D-Glc-(1-&gt;3)-[alpha-D-Gal-(1-&gt;6)]-alpha-D-Glc-(1-&gt;3)-[L-alpha-D-Hep-(1-&gt;7)]-4-O-PO3(2-)-L-alpha-D-Hep-(1-&gt;3)-4-O-PO3(2-)-L-alpha-D-Hep-(1-&gt;5)-[alpha-Kdo-(2-&gt;4)]-alpha-Kdo-(2-&gt;6)-lipid A + UDP-alpha-D-glucose = alpha-D-Glc-(1-&gt;2)-alpha-D-Glc-(1-&gt;3)-[alpha-D-Gal-(1-&gt;6)]-alpha-D-Glc-(1-&gt;3)-[L-alpha-D-Hep-(1-&gt;7)]-4-O-PO3(2-)-L-alpha-D-Hep-(1-&gt;3)-4-O-PO3(2-)-L-alpha-D-Hep-(1-&gt;5)-[alpha-Kdo-(2-&gt;4)]-alpha-Kdo-(2-&gt;6)-lipid A + UDP + H(+). It participates in bacterial outer membrane biogenesis; LPS core biosynthesis. Functionally, glucosyltransferase involved in the biosynthesis of the core oligosaccharide region of lipopolysaccharide (LPS). Catalyzes the addition of a glucose (glucose III) to the outer-core glucose II. This is Lipopolysaccharide 1,2-glucosyltransferase from Escherichia coli (strain K12).